The primary structure comprises 465 residues: Ribulose bisphosphate carboxylase large chain (465 aa).

At K4 the chain carries N6,N6,N6-trimethyllysine. N113 and T163 together coordinate substrate. Catalysis depends on K165, which acts as the Proton acceptor. K167 contacts substrate. K191, D193, and E194 together coordinate Mg(2+). Position 191 is an N6-carboxylysine (K191). H284 functions as the Proton acceptor in the catalytic mechanism. Residues R285, H317, and S369 each coordinate substrate.

This sequence belongs to the RuBisCO large chain family. Type I subfamily. As to quaternary structure, heterohexadecamer of 8 large chains and 8 small chains; disulfide-linked. The disulfide link is formed within the large subunit homodimers. Requires Mg(2+) as cofactor. The disulfide bond which can form in the large chain dimeric partners within the hexadecamer appears to be associated with oxidative stress and protein turnover.

It localises to the plastid. The protein localises to the chloroplast. The enzyme catalyses 2 (2R)-3-phosphoglycerate + 2 H(+) = D-ribulose 1,5-bisphosphate + CO2 + H2O. The catalysed reaction is D-ribulose 1,5-bisphosphate + O2 = 2-phosphoglycolate + (2R)-3-phosphoglycerate + 2 H(+). Its function is as follows. RuBisCO catalyzes two reactions: the carboxylation of D-ribulose 1,5-bisphosphate, the primary event in carbon dioxide fixation, as well as the oxidative fragmentation of the pentose substrate in the photorespiration process. Both reactions occur simultaneously and in competition at the same active site. The chain is Ribulose bisphosphate carboxylase large chain from Eucommia ulmoides (Hardy rubber tree).